A 474-amino-acid chain; its full sequence is Methylenetetrahydrofolate--tRNA-(uracil-5-)-methyltransferase TrmFO (474 aa).

15 to 20 (GAGLAG) serves as a coordination point for FAD. The segment at 453 to 474 (PLLPTAPDTTGAAGEETTQAES) is disordered.

Belongs to the MnmG family. TrmFO subfamily. FAD is required as a cofactor.

It localises to the cytoplasm. It carries out the reaction uridine(54) in tRNA + (6R)-5,10-methylene-5,6,7,8-tetrahydrofolate + NADH + H(+) = 5-methyluridine(54) in tRNA + (6S)-5,6,7,8-tetrahydrofolate + NAD(+). It catalyses the reaction uridine(54) in tRNA + (6R)-5,10-methylene-5,6,7,8-tetrahydrofolate + NADPH + H(+) = 5-methyluridine(54) in tRNA + (6S)-5,6,7,8-tetrahydrofolate + NADP(+). Catalyzes the folate-dependent formation of 5-methyl-uridine at position 54 (M-5-U54) in all tRNAs. The protein is Methylenetetrahydrofolate--tRNA-(uracil-5-)-methyltransferase TrmFO of Nitratidesulfovibrio vulgaris (strain ATCC 29579 / DSM 644 / CCUG 34227 / NCIMB 8303 / VKM B-1760 / Hildenborough) (Desulfovibrio vulgaris).